Here is a 365-residue protein sequence, read N- to C-terminus: MNKLALYCRPGFEKELAAEISEKAAELGIFGFARVEENQGYVIFECYQTDDADRLAREIPFNQLIFARQMIVVSDLLTDLPVQDRISPIIQQYQAIAHQINLTYSTELLVETADTNEAKSLSAFCRKFTVPLRQALKKQGWLQGTRHHKQGLTLHILMLDSTQCYVGYSYNYNHSEHFMGIPRLKFPLDAPSRSTLKLEEAILTFLSREEEKKRLNEQMYAVDLGACPGGWTYQLVKRGLFVYAVDHGKMAASLHDTGRIEHCAEDGFKFQPPKRSKIDWLVCDMVEQPSRISQLILKWLVNGWCHETIFNLKLPMKKRYLEVKKCLQMIEESLEKQGFRYHIQAKHLYHDREEITVHIAVKSLD.

S-adenosyl-L-methionine contacts are provided by residues Ser-194, 227-230 (CPGG), Asp-246, Asp-266, and Asp-284. Lys-313 (proton acceptor) is an active-site residue.

The protein belongs to the class I-like SAM-binding methyltransferase superfamily. RNA methyltransferase RlmE family. RlmM subfamily. In terms of assembly, monomer.

It is found in the cytoplasm. The enzyme catalyses cytidine(2498) in 23S rRNA + S-adenosyl-L-methionine = 2'-O-methylcytidine(2498) in 23S rRNA + S-adenosyl-L-homocysteine + H(+). Catalyzes the 2'-O-methylation at nucleotide C2498 in 23S rRNA. This Pasteurella multocida (strain Pm70) protein is Ribosomal RNA large subunit methyltransferase M.